The following is a 109-amino-acid chain: Class I hydrophobin 2 (109 aa).

The signal sequence occupies residues 1–18 (MQFKLAFVSIALATLAVA). 4 cysteine pairs are disulfide-bonded: Cys30–Cys90, Cys37–Cys84, Cys38–Cys71, and Cys91–Cys104.

The protein belongs to the fungal hydrophobin family. In terms of assembly, self-assembles to form functional amyloid fibrils called rodlets. Self-assembly into fibrillar rodlets occurs spontaneously at hydrophobic:hydrophilic interfaces and the rodlets further associate laterally to form amphipathic monolayers.

It localises to the secreted. It is found in the cell wall. In terms of biological role, aerial growth, conidiation, and dispersal of filamentous fungi in the environment rely upon a capability of their secreting small amphipathic proteins called hydrophobins (HPBs) with low sequence identity. Class I can self-assemble into an outermost layer of rodlet bundles on aerial cell surfaces, conferring cellular hydrophobicity that supports fungal growth, development and dispersal; whereas Class II form highly ordered films at water-air interfaces through intermolecular interactions but contribute nothing to the rodlet structure. Hyd2 is a class I hydrophobin that may allow the dikaryotic mycelia to attach to the hydrophobic surface of the substrate. Higher expression in dikaryotic mycelia than in monokaryotic mycelia indicates that dikaryons require more hyd2 hydrophobin than the monokaryons, presumably for a higher rate of hyphal growth. The chain is Class I hydrophobin 2 from Lentinula edodes (Shiitake mushroom).